The primary structure comprises 455 residues: F-box/LRR-repeat protein At5g35995 (455 aa).

In terms of domain architecture, F-box spans 4–51; the sequence is RDFISSLPDEVLGKKILSLLPTKLVVSTSVLSKRWRNLFHFVDSFDLE. 5 LRR repeats span residues 114 to 138, 152 to 176, 282 to 305, 308 to 324, and 325 to 348; these read DHYL…SYRT, FPAL…LISG, IRNV…CYTM, FDKL…ENGW, and QALP…LLHK.

This Arabidopsis thaliana (Mouse-ear cress) protein is F-box/LRR-repeat protein At5g35995.